The following is a 560-amino-acid chain: DNA ligase B (560 aa).

Lysine 124 serves as the catalytic N6-AMP-lysine intermediate.

It belongs to the NAD-dependent DNA ligase family. LigB subfamily.

It carries out the reaction NAD(+) + (deoxyribonucleotide)n-3'-hydroxyl + 5'-phospho-(deoxyribonucleotide)m = (deoxyribonucleotide)n+m + AMP + beta-nicotinamide D-nucleotide.. In terms of biological role, catalyzes the formation of phosphodiester linkages between 5'-phosphoryl and 3'-hydroxyl groups in double-stranded DNA using NAD as a coenzyme and as the energy source for the reaction. The chain is DNA ligase B from Escherichia coli O1:K1 / APEC.